The following is a 422-amino-acid chain: Putative nickel insertion protein (422 aa).

Belongs to the LarC family.

The polypeptide is Putative nickel insertion protein (Synechocystis sp. (strain ATCC 27184 / PCC 6803 / Kazusa)).